Reading from the N-terminus, the 284-residue chain is Diaminopimelate epimerase (284 aa).

Substrate is bound by residues Asn20, Gln53, and Asn73. The Proton donor role is filled by Cys82. Substrate contacts are provided by residues 83 to 84, Asn167, Asn200, and 218 to 219; these read GN and ER. Cys227 functions as the Proton acceptor in the catalytic mechanism. 228–229 contributes to the substrate binding site; it reads GS.

The protein belongs to the diaminopimelate epimerase family. As to quaternary structure, homodimer.

It is found in the cytoplasm. It carries out the reaction (2S,6S)-2,6-diaminopimelate = meso-2,6-diaminopimelate. Its pathway is amino-acid biosynthesis; L-lysine biosynthesis via DAP pathway; DL-2,6-diaminopimelate from LL-2,6-diaminopimelate: step 1/1. In terms of biological role, catalyzes the stereoinversion of LL-2,6-diaminopimelate (L,L-DAP) to meso-diaminopimelate (meso-DAP), a precursor of L-lysine and an essential component of the bacterial peptidoglycan. In Xanthomonas axonopodis pv. citri (strain 306), this protein is Diaminopimelate epimerase.